A 411-amino-acid polypeptide reads, in one-letter code: 2,3-bisphosphoglycerate-independent phosphoglycerate mutase (411 aa).

This sequence belongs to the BPG-independent phosphoglycerate mutase family. A-PGAM subfamily.

The catalysed reaction is (2R)-2-phosphoglycerate = (2R)-3-phosphoglycerate. The protein operates within carbohydrate degradation; glycolysis; pyruvate from D-glyceraldehyde 3-phosphate: step 3/5. Catalyzes the interconversion of 2-phosphoglycerate and 3-phosphoglycerate. This Pyrobaculum arsenaticum (strain DSM 13514 / JCM 11321 / PZ6) protein is 2,3-bisphosphoglycerate-independent phosphoglycerate mutase.